A 156-amino-acid polypeptide reads, in one-letter code: ATP synthase subunit b (156 aa).

A helical transmembrane segment spans residues 7 to 27 (FFAQMVVFFILWWVVAKFIWP).

It belongs to the ATPase B chain family. As to quaternary structure, F-type ATPases have 2 components, F(1) - the catalytic core - and F(0) - the membrane proton channel. F(1) has five subunits: alpha(3), beta(3), gamma(1), delta(1), epsilon(1). F(0) has three main subunits: a(1), b(2) and c(10-14). The alpha and beta chains form an alternating ring which encloses part of the gamma chain. F(1) is attached to F(0) by a central stalk formed by the gamma and epsilon chains, while a peripheral stalk is formed by the delta and b chains.

It localises to the cell inner membrane. F(1)F(0) ATP synthase produces ATP from ADP in the presence of a proton or sodium gradient. F-type ATPases consist of two structural domains, F(1) containing the extramembraneous catalytic core and F(0) containing the membrane proton channel, linked together by a central stalk and a peripheral stalk. During catalysis, ATP synthesis in the catalytic domain of F(1) is coupled via a rotary mechanism of the central stalk subunits to proton translocation. Its function is as follows. Component of the F(0) channel, it forms part of the peripheral stalk, linking F(1) to F(0). The protein is ATP synthase subunit b of Cupriavidus necator (strain ATCC 17699 / DSM 428 / KCTC 22496 / NCIMB 10442 / H16 / Stanier 337) (Ralstonia eutropha).